We begin with the raw amino-acid sequence, 385 residues long: MSGYGQQGVSAANIDSIRPKKRLSIGVVGSGNWGTAIAKICGENARAHGHHFRSKVRMWVFEEEIEYKGEKRKLTEVFNEAHENVKYLPGIECPPNVIAVPDVREVARRADILVFVVPHQFIERVCDQMVGLIRPGAVGISCIKGVAVSKEGVRLYSEVISEKLGIYCGVLSGANVANEVAREQFCETTIGFNPPNEVDIPREQIAAVFDRPYFSVVSVDDVAGVALGGALKNVVAMAVGFADGLEWGGNTKAAIMRRGLLEMQKFATTFFDSDPRTMVEQSCGIADLVTSCLGGRNNRCAEAFVKTGKSLETLEKELLGGQLLQGAATSKDVHEFLLTKDMVKDFPLFTAVYNISYEDMDPKDLIIVLQPLKEDSENEGGTETE.

NAD(+) contacts are provided by residues 29 to 34 (GSGNWG), F121, K144, and A177. Residue K144 coordinates substrate. K232 (proton acceptor) is an active-site residue. NAD(+)-binding residues include R296 and Q325. 296 to 297 (RN) contributes to the substrate binding site. A Phosphoserine modification is found at S376. A Phosphothreonine modification is found at T382.

This sequence belongs to the NAD-dependent glycerol-3-phosphate dehydrogenase family.

It is found in the cytoplasm. The enzyme catalyses sn-glycerol 3-phosphate + NAD(+) = dihydroxyacetone phosphate + NADH + H(+). The sequence is that of Glycerol-3-phosphate dehydrogenase [NAD(+)] 1 (gpd1) from Schizosaccharomyces pombe (strain 972 / ATCC 24843) (Fission yeast).